Reading from the N-terminus, the 90-residue chain is Probable Fe(2+)-trafficking protein (90 aa).

It belongs to the Fe(2+)-trafficking protein family. Monomer.

Could be a mediator in iron transactions between iron acquisition and iron-requiring processes, such as synthesis and/or repair of Fe-S clusters in biosynthetic enzymes. The chain is Probable Fe(2+)-trafficking protein from Proteus mirabilis (strain HI4320).